A 324-amino-acid polypeptide reads, in one-letter code: Probable cell division protein WhiA (324 aa).

Residues 275–308 (SLEELGALADPPLTKDAIAGRIRRLIAMADRRAD) constitute a DNA-binding region (H-T-H motif).

It belongs to the WhiA family.

Functionally, involved in cell division and chromosome segregation. This chain is Probable cell division protein WhiA, found in Acidothermus cellulolyticus (strain ATCC 43068 / DSM 8971 / 11B).